Reading from the N-terminus, the 134-residue chain is uncharacterized protein (134 aa).

3 consecutive transmembrane segments (helical) span residues 26-46 (VAVF…GNIG), 55-75 (LLKF…QIIV), and 101-121 (YAPM…GLIL).

Its subcellular location is the membrane. This is an uncharacterized protein from Dictyostelium discoideum (Social amoeba).